A 932-amino-acid polypeptide reads, in one-letter code: Isoleucine--tRNA ligase (932 aa).

The 'HIGH' region motif lies at 58 to 68; the sequence is PYANGDIHIGH. Glutamate 570 lines the L-isoleucyl-5'-AMP pocket. The 'KMSKS' region signature appears at 611–615; that stretch reads KMSKS. Lysine 614 serves as a coordination point for ATP. Residues cysteine 895, cysteine 898, cysteine 915, and cysteine 918 each coordinate Zn(2+).

This sequence belongs to the class-I aminoacyl-tRNA synthetase family. IleS type 1 subfamily. Monomer. Zn(2+) is required as a cofactor.

It is found in the cytoplasm. The catalysed reaction is tRNA(Ile) + L-isoleucine + ATP = L-isoleucyl-tRNA(Ile) + AMP + diphosphate. Its function is as follows. Catalyzes the attachment of isoleucine to tRNA(Ile). As IleRS can inadvertently accommodate and process structurally similar amino acids such as valine, to avoid such errors it has two additional distinct tRNA(Ile)-dependent editing activities. One activity is designated as 'pretransfer' editing and involves the hydrolysis of activated Val-AMP. The other activity is designated 'posttransfer' editing and involves deacylation of mischarged Val-tRNA(Ile). This chain is Isoleucine--tRNA ligase, found in Dechloromonas aromatica (strain RCB).